The primary structure comprises 264 residues: Thymidylate synthase (264 aa).

Arginine 21 provides a ligand contact to dUMP. (6R)-5,10-methylene-5,6,7,8-tetrahydrofolate is bound at residue histidine 51. Arginine 126–arginine 127 is a dUMP binding site. The Nucleophile role is filled by cysteine 146. Residues arginine 166–aspartate 169, asparagine 177, and histidine 207–tyrosine 209 each bind dUMP. A (6R)-5,10-methylene-5,6,7,8-tetrahydrofolate-binding site is contributed by aspartate 169. Residue alanine 263 participates in (6R)-5,10-methylene-5,6,7,8-tetrahydrofolate binding.

Belongs to the thymidylate synthase family. Bacterial-type ThyA subfamily. As to quaternary structure, homodimer.

The protein resides in the cytoplasm. The enzyme catalyses dUMP + (6R)-5,10-methylene-5,6,7,8-tetrahydrofolate = 7,8-dihydrofolate + dTMP. It participates in pyrimidine metabolism; dTTP biosynthesis. In terms of biological role, catalyzes the reductive methylation of 2'-deoxyuridine-5'-monophosphate (dUMP) to 2'-deoxythymidine-5'-monophosphate (dTMP) while utilizing 5,10-methylenetetrahydrofolate (mTHF) as the methyl donor and reductant in the reaction, yielding dihydrofolate (DHF) as a by-product. This enzymatic reaction provides an intracellular de novo source of dTMP, an essential precursor for DNA biosynthesis. In Alkalilimnicola ehrlichii (strain ATCC BAA-1101 / DSM 17681 / MLHE-1), this protein is Thymidylate synthase.